Consider the following 873-residue polypeptide: Bifunctional uridylyltransferase/uridylyl-removing enzyme (873 aa).

The uridylyltransferase stretch occupies residues 1–332 (MKYLSPLSLS…HQGEQDDAII (332 aa)). Residues 333 to 692 (IDDDFQRRGR…ISKNASRGGT (360 aa)) are uridylyl-removing. Residues 451-573 (VDEHSIRLLK…VRDEERLDYL (123 aa)) form the HD domain. ACT domains lie at 693–777 (EIFV…RPPR) and 800–873 (LMEF…RLSS).

The protein belongs to the GlnD family. The cofactor is Mg(2+).

It catalyses the reaction [protein-PII]-L-tyrosine + UTP = [protein-PII]-uridylyl-L-tyrosine + diphosphate. The catalysed reaction is [protein-PII]-uridylyl-L-tyrosine + H2O = [protein-PII]-L-tyrosine + UMP + H(+). Uridylyltransferase (UTase) activity is inhibited by glutamine, while glutamine activates uridylyl-removing (UR) activity. Functionally, modifies, by uridylylation and deuridylylation, the PII regulatory proteins (GlnB and homologs), in response to the nitrogen status of the cell that GlnD senses through the glutamine level. Under low glutamine levels, catalyzes the conversion of the PII proteins and UTP to PII-UMP and PPi, while under higher glutamine levels, GlnD hydrolyzes PII-UMP to PII and UMP (deuridylylation). Thus, controls uridylylation state and activity of the PII proteins, and plays an important role in the regulation of nitrogen assimilation and metabolism. This Aliivibrio fischeri (strain MJ11) (Vibrio fischeri) protein is Bifunctional uridylyltransferase/uridylyl-removing enzyme.